The primary structure comprises 194 residues: RNA polymerase II subunit A C-terminal domain phosphatase SSU72 like protein 3 (194 aa).

This sequence belongs to the SSU72 phosphatase family.

The protein resides in the nucleus. It catalyses the reaction O-phospho-L-seryl-[protein] + H2O = L-seryl-[protein] + phosphate. The catalysed reaction is O-phospho-L-threonyl-[protein] + H2O = L-threonyl-[protein] + phosphate. Its function is as follows. Protein phosphatase that catalyzes the dephosphorylation of the C-terminal domain of RNA polymerase II. Plays a role in RNA processing and termination. The polypeptide is RNA polymerase II subunit A C-terminal domain phosphatase SSU72 like protein 3 (Homo sapiens (Human)).